The chain runs to 428 residues: Ribosomal RNA small subunit methyltransferase B (428 aa).

S-adenosyl-L-methionine contacts are provided by residues C253–K259, D276, D302, and D321. Catalysis depends on C374, which acts as the Nucleophile.

Belongs to the class I-like SAM-binding methyltransferase superfamily. RsmB/NOP family.

It localises to the cytoplasm. It catalyses the reaction cytidine(967) in 16S rRNA + S-adenosyl-L-methionine = 5-methylcytidine(967) in 16S rRNA + S-adenosyl-L-homocysteine + H(+). Functionally, specifically methylates the cytosine at position 967 (m5C967) of 16S rRNA. The polypeptide is Ribosomal RNA small subunit methyltransferase B (Citrobacter koseri (strain ATCC BAA-895 / CDC 4225-83 / SGSC4696)).